Here is a 410-residue protein sequence, read N- to C-terminus: Interleukin-1 receptor type 2 (410 aa).

Positions 1–13 are cleaved as a signal peptide; it reads MFILLVLVTGVSA. The Extracellular segment spans residues 14-355; sequence FTTPTVVHTG…SQSLHTTVKE (342 aa). 3 consecutive Ig-like C2-type domains span residues 35-136, 146-237, and 249-357; these read PTVH…VELK, PHVS…RNIE, and PVII…KEVS. Disulfide bonds link C42–C128, C64–C120, and C164–C219. 4 N-linked (GlcNAc...) asparagine glycosylation sites follow: N124, N208, N231, and N289. A disulfide bond links C270 and C338. A helical membrane pass occupies residues 356–381; the sequence is VSSTFSWSIALAPLSLIILVVGAIWM. Residues 382–410 lie on the Cytoplasmic side of the membrane; it reads RRRCKRRAGKTYGLTKLRTDNQDFPSSPN.

Belongs to the interleukin-1 receptor family. Associates with IL1RAP to form a non-signaling interleukin-1 receptor complex. In terms of processing, a soluble form (sIL1R2) can also be produced by proteolytic cleavage at the cell surface (shedding) involving a metalloproteinase. As to expression, strongly expressed in B-cells, with levels 21 times higher than IL1R1. In T-cells expressed 5 times more compared with IL1R1.

It is found in the membrane. Its subcellular location is the cell membrane. The protein localises to the secreted. Non-signaling receptor for IL1A, IL1B and IL1RN. Reduces IL1B activities. Serves as a decoy receptor by competitive binding to IL1B and preventing its binding to IL1R1. Also modulates cellular response through non-signaling association with IL1RAP after binding to IL1B. IL1R2 (membrane and secreted forms) preferentially binds IL1B and poorly IL1A and IL1RN. The secreted IL1R2 recruits secreted IL1RAP with high affinity; this complex formation may be the dominant mechanism for neutralization of IL1B by secreted/soluble receptors. The chain is Interleukin-1 receptor type 2 (Il1r2) from Mus musculus (Mouse).